The following is a 162-amino-acid chain: Large ribosomal subunit protein uL30 (162 aa).

This sequence belongs to the universal ribosomal protein uL30 family. In terms of assembly, part of the 50S ribosomal subunit.

The chain is Large ribosomal subunit protein uL30 from Desulfurococcus amylolyticus (strain DSM 18924 / JCM 16383 / VKM B-2413 / 1221n) (Desulfurococcus kamchatkensis).